An 81-amino-acid chain; its full sequence is MTKKIGIEQSLSDVEQALKQKGYDVVMMKTPEDAKNCDCCVVTGLDSNVQGIADTSTQAPVITASGMTADEICSEVEKKFH.

The protein belongs to the UPF0180 family.

The polypeptide is UPF0180 protein RBAM_013970 (Bacillus velezensis (strain DSM 23117 / BGSC 10A6 / LMG 26770 / FZB42) (Bacillus amyloliquefaciens subsp. plantarum)).